The sequence spans 668 residues: Packaging protein UL32 homolog (668 aa).

Positions 1–10 (MNPSTHVSSN) are enriched in polar residues. Residues 1-35 (MNPSTHVSSNGPTTPPHGPHTTFLPPTSPAPSTSS) form a disordered region. Residues 19–35 (PHTTFLPPTSPAPSTSS) are compositionally biased toward low complexity. The Zn(2+) site is built by C200, C203, H276, and C282. A zinc finger 1 region spans residues 200 to 282 (CNLCAIISIC…FHLHFFINRC (83 aa)). A disordered region spans residues 401–430 (IEEEEDEEGGEKGGDDPGRHNGGGTSGGFS). Residues 410-419 (GEKGGDDPGR) are compositionally biased toward basic and acidic residues. Positions 459, 462, 567, and 574 each coordinate Zn(2+). A zinc finger 2 region spans residues 459–574 (CLLCELMACS…YKHFFCDPQC (116 aa)).

This sequence belongs to the herpesviridae UL32 protein family.

The protein localises to the host cytoplasm. It is found in the host nucleus. Its function is as follows. Plays a role in efficient localization of neo-synthesized capsids to nuclear replication compartments, thereby controlling cleavage and packaging of virus genomic DNA. The protein is Packaging protein UL32 homolog (UL52) of Homo sapiens (Human).